A 132-amino-acid chain; its full sequence is ATP synthase epsilon chain (132 aa).

It belongs to the ATPase epsilon chain family. F-type ATPases have 2 components, CF(1) - the catalytic core - and CF(0) - the membrane proton channel. CF(1) has five subunits: alpha(3), beta(3), gamma(1), delta(1), epsilon(1). CF(0) has three main subunits: a, b and c.

The protein resides in the cell inner membrane. In terms of biological role, produces ATP from ADP in the presence of a proton gradient across the membrane. This Anaeromyxobacter dehalogenans (strain 2CP-C) protein is ATP synthase epsilon chain.